Reading from the N-terminus, the 224-residue chain is ATP-dependent dethiobiotin synthetase BioD (224 aa).

Thr-18 is a binding site for Mg(2+). The active site involves Lys-39. A substrate-binding site is contributed by Ser-43. Residues Asp-56 and Glu-117 each contribute to the Mg(2+) site. ATP is bound by residues Asp-56, 117 to 120 (EGVG), and 177 to 178 (NE).

The protein belongs to the dethiobiotin synthetase family. Homodimer. Mg(2+) is required as a cofactor.

Its subcellular location is the cytoplasm. The enzyme catalyses (7R,8S)-7,8-diammoniononanoate + CO2 + ATP = (4R,5S)-dethiobiotin + ADP + phosphate + 3 H(+). Its pathway is cofactor biosynthesis; biotin biosynthesis; biotin from 7,8-diaminononanoate: step 1/2. Functionally, catalyzes a mechanistically unusual reaction, the ATP-dependent insertion of CO2 between the N7 and N8 nitrogen atoms of 7,8-diaminopelargonic acid (DAPA, also called 7,8-diammoniononanoate) to form a ureido ring. This chain is ATP-dependent dethiobiotin synthetase BioD, found in Xanthomonas axonopodis pv. citri (strain 306).